A 290-amino-acid chain; its full sequence is Type II secretion system protein C (290 aa).

Over 1–28 (MTLPFRDDLLSSLLARCKTVPLSRFSQP) the chain is Cytoplasmic. A helical transmembrane segment spans residues 29-46 (LFWLLLLLLAHQCAGLTW). The Periplasmic portion of the chain corresponds to 47-290 (RLLDLGSQQS…LYDVYVGLSE (244 aa)).

This sequence belongs to the GSP C family.

Its subcellular location is the cell inner membrane. In terms of biological role, involved in a type II secretion system (T2SS, formerly general secretion pathway, GSP) for the export of proteins. In Aeromonas salmonicida, this protein is Type II secretion system protein C (exeC).